The following is a 168-amino-acid chain: Protein-export protein SecB (168 aa).

This sequence belongs to the SecB family. Homotetramer, a dimer of dimers. One homotetramer interacts with 1 SecA dimer.

The protein localises to the cytoplasm. Functionally, one of the proteins required for the normal export of preproteins out of the cell cytoplasm. It is a molecular chaperone that binds to a subset of precursor proteins, maintaining them in a translocation-competent state. It also specifically binds to its receptor SecA. In Thioalkalivibrio sulfidiphilus (strain HL-EbGR7), this protein is Protein-export protein SecB.